Consider the following 227-residue polypeptide: Cytochrome c oxidase subunit 2 (227 aa).

Residues 1–14 are Mitochondrial intermembrane-facing; that stretch reads MAYPLQLGLQDATS. The chain crosses the membrane as a helical span at residues 15–45; the sequence is PIMEELMNFHDHTLMIVFLISSLVLYIISLM. At 46 to 59 the chain is on the mitochondrial matrix side; sequence LTTKLTHTSTMDAQ. A helical membrane pass occupies residues 60–87; the sequence is EVETIWTILPAAILVLIALPSLRILYMM. The Mitochondrial intermembrane segment spans residues 88–227; sequence DEINNPVLTV…YFENWSASMI (140 aa). The Cu cation site is built by His161, Cys196, Glu198, Cys200, His204, and Met207. Glu198 provides a ligand contact to Mg(2+). At Tyr218 the chain carries Phosphotyrosine.

Belongs to the cytochrome c oxidase subunit 2 family. In terms of assembly, component of the cytochrome c oxidase (complex IV, CIV), a multisubunit enzyme composed of 14 subunits. The complex is composed of a catalytic core of 3 subunits MT-CO1, MT-CO2 and MT-CO3, encoded in the mitochondrial DNA, and 11 supernumerary subunits COX4I, COX5A, COX5B, COX6A, COX6B, COX6C, COX7A, COX7B, COX7C, COX8 and NDUFA4, which are encoded in the nuclear genome. The complex exists as a monomer or a dimer and forms supercomplexes (SCs) in the inner mitochondrial membrane with NADH-ubiquinone oxidoreductase (complex I, CI) and ubiquinol-cytochrome c oxidoreductase (cytochrome b-c1 complex, complex III, CIII), resulting in different assemblies (supercomplex SCI(1)III(2)IV(1) and megacomplex MCI(2)III(2)IV(2)). Found in a complex with TMEM177, COA6, COX18, COX20, SCO1 and SCO2. Interacts with TMEM177 in a COX20-dependent manner. Interacts with COX20. Interacts with COX16. Cu cation serves as cofactor.

It localises to the mitochondrion inner membrane. The catalysed reaction is 4 Fe(II)-[cytochrome c] + O2 + 8 H(+)(in) = 4 Fe(III)-[cytochrome c] + 2 H2O + 4 H(+)(out). Its function is as follows. Component of the cytochrome c oxidase, the last enzyme in the mitochondrial electron transport chain which drives oxidative phosphorylation. The respiratory chain contains 3 multisubunit complexes succinate dehydrogenase (complex II, CII), ubiquinol-cytochrome c oxidoreductase (cytochrome b-c1 complex, complex III, CIII) and cytochrome c oxidase (complex IV, CIV), that cooperate to transfer electrons derived from NADH and succinate to molecular oxygen, creating an electrochemical gradient over the inner membrane that drives transmembrane transport and the ATP synthase. Cytochrome c oxidase is the component of the respiratory chain that catalyzes the reduction of oxygen to water. Electrons originating from reduced cytochrome c in the intermembrane space (IMS) are transferred via the dinuclear copper A center (CU(A)) of subunit 2 and heme A of subunit 1 to the active site in subunit 1, a binuclear center (BNC) formed by heme A3 and copper B (CU(B)). The BNC reduces molecular oxygen to 2 water molecules using 4 electrons from cytochrome c in the IMS and 4 protons from the mitochondrial matrix. In Micaelamys namaquensis (Namaqua rock rat), this protein is Cytochrome c oxidase subunit 2 (MT-CO2).